Reading from the N-terminus, the 873-residue chain is Leucine--tRNA ligase (873 aa).

The short motif at 42–52 is the 'HIGH' region element; that stretch reads PYPSGKLHMGH. The 'KMSKS' region signature appears at 628–632; that stretch reads KMSKS. Lysine 631 is an ATP binding site.

Belongs to the class-I aminoacyl-tRNA synthetase family.

The protein resides in the cytoplasm. The enzyme catalyses tRNA(Leu) + L-leucine + ATP = L-leucyl-tRNA(Leu) + AMP + diphosphate. The chain is Leucine--tRNA ligase from Azoarcus sp. (strain BH72).